Reading from the N-terminus, the 213-residue chain is Thiopurine S-methyltransferase (213 aa).

S-adenosyl-L-methionine-binding residues include tryptophan 10, leucine 46, glutamate 67, and arginine 124.

This sequence belongs to the class I-like SAM-binding methyltransferase superfamily. TPMT family.

The protein localises to the cytoplasm. The enzyme catalyses S-adenosyl-L-methionine + a thiopurine = S-adenosyl-L-homocysteine + a thiopurine S-methylether.. In Xanthobacter autotrophicus (strain ATCC BAA-1158 / Py2), this protein is Thiopurine S-methyltransferase.